We begin with the raw amino-acid sequence, 275 residues long: 2,3,4,5-tetrahydropyridine-2,6-dicarboxylate N-succinyltransferase (275 aa).

Positions 108 and 145 each coordinate substrate.

The protein belongs to the transferase hexapeptide repeat family. As to quaternary structure, homotrimer.

It localises to the cytoplasm. It catalyses the reaction (S)-2,3,4,5-tetrahydrodipicolinate + succinyl-CoA + H2O = (S)-2-succinylamino-6-oxoheptanedioate + CoA. Its pathway is amino-acid biosynthesis; L-lysine biosynthesis via DAP pathway; LL-2,6-diaminopimelate from (S)-tetrahydrodipicolinate (succinylase route): step 1/3. The protein is 2,3,4,5-tetrahydropyridine-2,6-dicarboxylate N-succinyltransferase of Jannaschia sp. (strain CCS1).